Here is a 118-residue protein sequence, read N- to C-terminus: Large ribosomal subunit protein bL20 (118 aa).

The protein belongs to the bacterial ribosomal protein bL20 family.

Binds directly to 23S ribosomal RNA and is necessary for the in vitro assembly process of the 50S ribosomal subunit. It is not involved in the protein synthesizing functions of that subunit. This Cyanothece sp. (strain PCC 7425 / ATCC 29141) protein is Large ribosomal subunit protein bL20.